We begin with the raw amino-acid sequence, 476 residues long: Glutamyl-tRNA(Gln) amidotransferase subunit A (476 aa).

Active-site charge relay system residues include lysine 70 and serine 145. The active-site Acyl-ester intermediate is the serine 169.

The protein belongs to the amidase family. GatA subfamily. In terms of assembly, heterotrimer of A, B and C subunits.

It catalyses the reaction L-glutamyl-tRNA(Gln) + L-glutamine + ATP + H2O = L-glutaminyl-tRNA(Gln) + L-glutamate + ADP + phosphate + H(+). Allows the formation of correctly charged Gln-tRNA(Gln) through the transamidation of misacylated Glu-tRNA(Gln) in organisms which lack glutaminyl-tRNA synthetase. The reaction takes place in the presence of glutamine and ATP through an activated gamma-phospho-Glu-tRNA(Gln). The chain is Glutamyl-tRNA(Gln) amidotransferase subunit A from Methanosarcina mazei (strain ATCC BAA-159 / DSM 3647 / Goe1 / Go1 / JCM 11833 / OCM 88) (Methanosarcina frisia).